Here is a 375-residue protein sequence, read N- to C-terminus: Beta sliding clamp (375 aa).

The protein belongs to the beta sliding clamp family. As to quaternary structure, forms a ring-shaped head-to-tail homodimer around DNA which binds and tethers DNA polymerases and other proteins to the DNA. The DNA replisome complex has a single clamp-loading complex (3 tau and 1 each of delta, delta', psi and chi subunits) which binds 3 Pol III cores (1 core on the leading strand and 2 on the lagging strand) each with a beta sliding clamp dimer. Additional proteins in the replisome are other copies of gamma, psi and chi, Ssb, DNA helicase and RNA primase.

It localises to the cytoplasm. In terms of biological role, confers DNA tethering and processivity to DNA polymerases and other proteins. Acts as a clamp, forming a ring around DNA (a reaction catalyzed by the clamp-loading complex) which diffuses in an ATP-independent manner freely and bidirectionally along dsDNA. Initially characterized for its ability to contact the catalytic subunit of DNA polymerase III (Pol III), a complex, multichain enzyme responsible for most of the replicative synthesis in bacteria; Pol III exhibits 3'-5' exonuclease proofreading activity. The beta chain is required for initiation of replication as well as for processivity of DNA replication. The protein is Beta sliding clamp (dnaN) of Mycoplasma capricolum subsp. capricolum (strain California kid / ATCC 27343 / NCTC 10154).